A 160-amino-acid chain; its full sequence is MENVKVENLLINYKTLEKFKRFREYGNQELTMMEDLENNIIENDSKSPFYGIYFGNNLIARMSLYEVSKQYDYYFEPSQDYLTLWKLEVLPDYQNKGYGEVLVNFAKSFELPIKTNPRINSHGFWEKMGFIKAHYEMERDLGENPLIWLPEGVKEKDMKS.

The region spanning 9–151 is the N-acetyltransferase domain; that stretch reads LLINYKTLEK…GENPLIWLPE (143 aa).

This is an uncharacterized protein from Oceanobacillus iheyensis (strain DSM 14371 / CIP 107618 / JCM 11309 / KCTC 3954 / HTE831).